A 530-amino-acid polypeptide reads, in one-letter code: AA9 family lytic polysaccharide monooxygenase C (530 aa).

The first 18 residues, 1–18 (MQLKSTVHFLSLLAYTAA), serve as a signal peptide directing secretion. Cu(2+)-binding residues include histidine 19 and histidine 103. Disulfide bonds link cysteine 72/cysteine 190 and cysteine 114/cysteine 118. N-linked (GlcNAc...) asparagine glycosylation occurs at asparagine 150. Glutamine 185 lines the O2 pocket. Position 187 (tyrosine 187) interacts with Cu(2+). Residues 238–251 (YGSGSSSSQNSVES) show a composition bias toward low complexity. Disordered stretches follow at residues 238–279 (YGSG…STSA), 297–329 (ESSS…SSSA), 348–375 (YSSA…KLSS), and 492–512 (GNGA…GTTP). Basic and acidic residues predominate over residues 312-324 (KSVEAKETTKVEE). The span at 348 to 368 (YSSASPSSSPVLSSSKPASTS) shows a compositional bias: low complexity.

The protein belongs to the polysaccharide monooxygenase AA9 family. The cofactor is Cu(2+).

It localises to the secreted. The catalysed reaction is [(1-&gt;4)-beta-D-glucosyl]n+m + reduced acceptor + O2 = 4-dehydro-beta-D-glucosyl-[(1-&gt;4)-beta-D-glucosyl]n-1 + [(1-&gt;4)-beta-D-glucosyl]m + acceptor + H2O.. Functionally, lytic polysaccharide monooxygenase (LPMO) that depolymerizes polysaccharides via the oxidation of scissile alpha- or beta-(1-4)-glycosidic bonds, yielding C1 or C4 oxidation products. Catalysis by LPMOs requires the reduction of the active-site copper from Cu(II) to Cu(I) by a reducing agent and H(2)O(2) or O(2) as a cosubstrate. Amorphous cellulose is not a suitable substrate for LPMO9C, which may act at the surface of cellulose microfibrils without any release of soluble products. This chain is AA9 family lytic polysaccharide monooxygenase C, found in Geotrichum candidum (Oospora lactis).